A 542-amino-acid polypeptide reads, in one-letter code: Chaperonin GroEL 2 (542 aa).

ATP-binding positions include T29–P32, D86–T90, G413, N477–A479, and D493.

The protein belongs to the chaperonin (HSP60) family. Forms a cylinder of 14 subunits composed of two heptameric rings stacked back-to-back. Interacts with the co-chaperonin GroES.

It is found in the cytoplasm. It catalyses the reaction ATP + H2O + a folded polypeptide = ADP + phosphate + an unfolded polypeptide.. Together with its co-chaperonin GroES, plays an essential role in assisting protein folding. The GroEL-GroES system forms a nano-cage that allows encapsulation of the non-native substrate proteins and provides a physical environment optimized to promote and accelerate protein folding. This chain is Chaperonin GroEL 2, found in Frankia alni (strain DSM 45986 / CECT 9034 / ACN14a).